Here is a 145-residue protein sequence, read N- to C-terminus: Bacilliredoxin SAR1592 (145 aa).

Belongs to the bacilliredoxin family.

The sequence is that of Bacilliredoxin SAR1592 from Staphylococcus aureus (strain MRSA252).